Reading from the N-terminus, the 445-residue chain is UDP-N-acetylmuramate--L-alanine ligase (445 aa).

An ATP-binding site is contributed by 108 to 114; the sequence is GSDGKTT.

Belongs to the MurCDEF family.

It is found in the cytoplasm. The enzyme catalyses UDP-N-acetyl-alpha-D-muramate + L-alanine + ATP = UDP-N-acetyl-alpha-D-muramoyl-L-alanine + ADP + phosphate + H(+). The protein operates within cell wall biogenesis; peptidoglycan biosynthesis. Its function is as follows. Cell wall formation. This is UDP-N-acetylmuramate--L-alanine ligase from Pseudothermotoga lettingae (strain ATCC BAA-301 / DSM 14385 / NBRC 107922 / TMO) (Thermotoga lettingae).